A 634-amino-acid polypeptide reads, in one-letter code: MDDDGGGSPGHYGGGGIHLVCEYCGHGSEYAEDDADNGFFTCRQCSAIHTSTQNTATNPFDFPMTPAHLSAHRRPTQPTPTPKPFPAPRGAATGAAAPDFDDLGEPSEPRDFATGANAWGNPEDVAARVRWRYVRGLQVILQRQLEALVERHRVGSLAASLAGTIWLRWVAASKVFDEMWVHKMLAIAASVEEGHSASKDKQSELEGDAQKSQSSYEFLFLRSLRMMLPVYSTLAVCFLACHVARETILPTDICRWAMEGKLPYVAAFTQVDKLLGSSLNDCPLSSRQLFRPTRVIGAWQLEAAAGSIAQKIGLLLPSVNFYLIAQRFLKELSLPIEKILPHACRIYEWAMPAELWLSSNPGRVPSRVCVMAILIVALRVLYGINGQGIWESIAQTENAVGSDPEASAPHSIEPDSNNSEEFDARELLCTLAASYDKIDVGHDYSKEVHSYLKYCKDVVFTGMTFSLEEEHLIDIFWDMYKGKEVMLLDENAKLCQEKLRTTNGVNKRCRDGRFADTKCCSTPLGNCALQSIKSKMEENGFCYVSPRKRLVSDGYLLYTRRESSGSLIYVAHADYYILLRPFAKLAEVDVRVLHSSVLKLERRLGWIEERVGRSLNTLQNLHDEASDDERPVSD.

The segment at 19-51 (LVCEYCGHGSEYAEDDADNGFFTCRQCSAIHTS) adopts an RRN7-type zinc-finger fold. 4 residues coordinate Zn(2+): Cys21, Cys24, Cys42, and Cys45. The interval 51 to 80 (STQNTATNPFDFPMTPAHLSAHRRPTQPTP) is B-reader. The disordered stretch occupies residues 56 to 117 (ATNPFDFPMT…EPRDFATGAN (62 aa)). Positions 77–87 (QPTPTPKPFPA) are enriched in pro residues. The tract at residues 81–83 (TPK) is B-linker. The interval 84-281 (PFPAPRGAAT…DKLLGSSLND (198 aa)) is N-terminal cyclin fold. Residues 88 to 98 (PRGAATGAAAP) show a composition bias toward low complexity. The interval 282-284 (CPL) is C-terminal cyclin fold.

This sequence belongs to the RRN7/TAF1B family.

Its subcellular location is the nucleus. It is found in the nucleolus. In terms of biological role, component of RNA polymerase I core factor complex that acts as a GTF2B/TFIIB-like factor and plays a key role in multiple steps during transcription initiation such as pre-initiation complex (PIC) assembly and postpolymerase recruitment events in polymerase I (Pol I) transcription. Binds rDNA promoters and plays a role in Pol I recruitment. This is TATA box-binding protein-associated factor RNA polymerase I subunit B from Oryza sativa subsp. indica (Rice).